Consider the following 264-residue polypeptide: Thymidylate synthase (264 aa).

Residues R21 and 126–127 (RR) contribute to the dUMP site. The active-site Nucleophile is the C146. Residues 166–169 (RSAD), N177, and 207–209 (HLY) each bind dUMP. D169 contacts (6R)-5,10-methylene-5,6,7,8-tetrahydrofolate. Residue A263 participates in (6R)-5,10-methylene-5,6,7,8-tetrahydrofolate binding.

This sequence belongs to the thymidylate synthase family. Bacterial-type ThyA subfamily. As to quaternary structure, homodimer.

The protein localises to the cytoplasm. It catalyses the reaction dUMP + (6R)-5,10-methylene-5,6,7,8-tetrahydrofolate = 7,8-dihydrofolate + dTMP. Its pathway is pyrimidine metabolism; dTTP biosynthesis. Catalyzes the reductive methylation of 2'-deoxyuridine-5'-monophosphate (dUMP) to 2'-deoxythymidine-5'-monophosphate (dTMP) while utilizing 5,10-methylenetetrahydrofolate (mTHF) as the methyl donor and reductant in the reaction, yielding dihydrofolate (DHF) as a by-product. This enzymatic reaction provides an intracellular de novo source of dTMP, an essential precursor for DNA biosynthesis. In Afipia carboxidovorans (strain ATCC 49405 / DSM 1227 / KCTC 32145 / OM5) (Oligotropha carboxidovorans), this protein is Thymidylate synthase.